The following is a 310-amino-acid chain: Carbamate kinase 1 (310 aa).

Belongs to the carbamate kinase family.

It is found in the cytoplasm. The catalysed reaction is hydrogencarbonate + NH4(+) + ATP = carbamoyl phosphate + ADP + H2O + H(+). Its pathway is metabolic intermediate metabolism; carbamoyl phosphate degradation; CO(2) and NH(3) from carbamoyl phosphate: step 1/1. The chain is Carbamate kinase 1 (arcC1) from Staphylococcus aureus (strain COL).